The following is a 190-amino-acid chain: Elongation factor P (190 aa).

Belongs to the elongation factor P family.

The protein resides in the cytoplasm. Its pathway is protein biosynthesis; polypeptide chain elongation. Its function is as follows. Involved in peptide bond synthesis. Stimulates efficient translation and peptide-bond synthesis on native or reconstituted 70S ribosomes in vitro. Probably functions indirectly by altering the affinity of the ribosome for aminoacyl-tRNA, thus increasing their reactivity as acceptors for peptidyl transferase. This is Elongation factor P from Hyphomonas neptunium (strain ATCC 15444).